The chain runs to 379 residues: Succinyl-diaminopimelate desuccinylase (379 aa).

Histidine 68 serves as a coordination point for Zn(2+). Aspartate 70 is a catalytic residue. Aspartate 101 contacts Zn(2+). Glutamate 135 (proton acceptor) is an active-site residue. Zn(2+)-binding residues include glutamate 136, glutamate 164, and histidine 350.

Belongs to the peptidase M20A family. DapE subfamily. In terms of assembly, homodimer. The cofactor is Zn(2+). Co(2+) is required as a cofactor.

It carries out the reaction N-succinyl-(2S,6S)-2,6-diaminopimelate + H2O = (2S,6S)-2,6-diaminopimelate + succinate. It functions in the pathway amino-acid biosynthesis; L-lysine biosynthesis via DAP pathway; LL-2,6-diaminopimelate from (S)-tetrahydrodipicolinate (succinylase route): step 3/3. Functionally, catalyzes the hydrolysis of N-succinyl-L,L-diaminopimelic acid (SDAP), forming succinate and LL-2,6-diaminopimelate (DAP), an intermediate involved in the bacterial biosynthesis of lysine and meso-diaminopimelic acid, an essential component of bacterial cell walls. This chain is Succinyl-diaminopimelate desuccinylase, found in Bordetella bronchiseptica (strain ATCC BAA-588 / NCTC 13252 / RB50) (Alcaligenes bronchisepticus).